We begin with the raw amino-acid sequence, 377 residues long: N5-carboxyaminoimidazole ribonucleotide synthase (377 aa).

ATP contacts are provided by residues Arg93, Lys133, Gly138–Gln144, Glu175–Val178, Glu183, His206, and Asn257–Glu258. The 191-residue stretch at Lys97–Cys287 folds into the ATP-grasp domain.

This sequence belongs to the PurK/PurT family. In terms of assembly, homodimer.

The enzyme catalyses 5-amino-1-(5-phospho-beta-D-ribosyl)imidazole + hydrogencarbonate + ATP = 5-carboxyamino-1-(5-phospho-D-ribosyl)imidazole + ADP + phosphate + 2 H(+). It functions in the pathway purine metabolism; IMP biosynthesis via de novo pathway; 5-amino-1-(5-phospho-D-ribosyl)imidazole-4-carboxylate from 5-amino-1-(5-phospho-D-ribosyl)imidazole (N5-CAIR route): step 1/2. Its function is as follows. Catalyzes the ATP-dependent conversion of 5-aminoimidazole ribonucleotide (AIR) and HCO(3)(-) to N5-carboxyaminoimidazole ribonucleotide (N5-CAIR). The protein is N5-carboxyaminoimidazole ribonucleotide synthase of Vibrio vulnificus (strain YJ016).